A 237-amino-acid chain; its full sequence is Ribonuclease 3 (237 aa).

Positions 4 to 133 (LTELEKSLGV…VLAAIYLDKG (130 aa)) constitute an RNase III domain. A Mg(2+)-binding site is contributed by glutamate 46. Active-site residues include aspartate 50 and glutamate 122. Residue glutamate 122 coordinates Mg(2+). Residues 160 to 229 (DYKSRLQELV…AKEALQQFEN (70 aa)) form the DRBM domain.

The protein belongs to the ribonuclease III family. Homodimer. It depends on Mg(2+) as a cofactor.

Its subcellular location is the cytoplasm. The catalysed reaction is Endonucleolytic cleavage to 5'-phosphomonoester.. Functionally, digests double-stranded RNA. Involved in the processing of primary rRNA transcript to yield the immediate precursors to the large and small rRNAs (23S and 16S). Processes some mRNAs, and tRNAs when they are encoded in the rRNA operon. Processes pre-crRNA and tracrRNA of type II CRISPR loci if present in the organism. This Dehalococcoides mccartyi (strain ATCC BAA-2266 / KCTC 15142 / 195) (Dehalococcoides ethenogenes (strain 195)) protein is Ribonuclease 3.